The sequence spans 266 residues: Adaptin ear-binding coat-associated protein 2 (266 aa).

2 disordered regions span residues Met-165–Thr-198 and Asp-245–Phe-266. The residue at position 181 (Ser-181) is a Phosphoserine. Short sequence motifs (WXXF motif) lie at residues Trp-243–Phe-246 and Trp-263–Phe-266. Low complexity predominate over residues Ser-249–Phe-266.

It belongs to the NECAP family. Interacts with AP1G1 and AP2A1 components of the adapter protein complexes AP-1 and AP-2. Interacts with the GAE domain proteins GGA1, GGA2 and GGA3. As to expression, expressed in brain, heart, kidney, liver, lung, skeletal muscles and testis (at protein level).

It is found in the cytoplasmic vesicle. The protein resides in the clathrin-coated vesicle membrane. It localises to the cell membrane. In terms of biological role, involved in endocytosis. The protein is Adaptin ear-binding coat-associated protein 2 (Necap2) of Mus musculus (Mouse).